The primary structure comprises 302 residues: MTSRANATSPFKTVALVGRYSAANIAAPLLELASCIAARGHDIVFERETALNIGVQDYPALPPDEMARHADVAVVLGGDGTLLGIGRHLAGASVPVIGVNHGRLGFMTDIPFEDVHNVLPDMLAGQYEAETRSLLQAQVVRDDETIFSALAFNDVVVNRSGFSGMVELAVSVDGFFMYNQRSDGLIVSTPTGSTAYALSAGGPILHPALSGLVLVPIAPHALSNRPIVIPHDAEVVIQVTSGRDASVNFDMQSLTSLLPGDRIVVRRSERTVRLLHPVGYNYYATLRKKLHWHEYPTEDNRL.

The Proton acceptor role is filled by aspartate 79. Residues 79–80 (DG), 153–154 (ND), arginine 181, aspartate 183, 194–199 (TAYALS), alanine 218, and glutamine 252 contribute to the NAD(+) site.

Belongs to the NAD kinase family. A divalent metal cation is required as a cofactor.

The protein localises to the cytoplasm. The catalysed reaction is NAD(+) + ATP = ADP + NADP(+) + H(+). Functionally, involved in the regulation of the intracellular balance of NAD and NADP, and is a key enzyme in the biosynthesis of NADP. Catalyzes specifically the phosphorylation on 2'-hydroxyl of the adenosine moiety of NAD to yield NADP. In Ralstonia nicotianae (strain ATCC BAA-1114 / GMI1000) (Ralstonia solanacearum), this protein is NAD kinase.